We begin with the raw amino-acid sequence, 580 residues long: Arginine--tRNA ligase (580 aa).

A 'HIGH' region motif is present at residues 131-141; the sequence is ANPTGPLHVGH.

The protein belongs to the class-I aminoacyl-tRNA synthetase family. In terms of assembly, monomer.

The protein localises to the cytoplasm. It carries out the reaction tRNA(Arg) + L-arginine + ATP = L-arginyl-tRNA(Arg) + AMP + diphosphate. The protein is Arginine--tRNA ligase of Ruegeria sp. (strain TM1040) (Silicibacter sp.).